The primary structure comprises 141 residues: Large ribosomal subunit protein uL11 (141 aa).

The protein belongs to the universal ribosomal protein uL11 family. Part of the ribosomal stalk of the 50S ribosomal subunit. Interacts with L10 and the large rRNA to form the base of the stalk. L10 forms an elongated spine to which L12 dimers bind in a sequential fashion forming a multimeric L10(L12)X complex. In terms of processing, one or more lysine residues are methylated.

Forms part of the ribosomal stalk which helps the ribosome interact with GTP-bound translation factors. In Prochlorococcus marinus (strain SARG / CCMP1375 / SS120), this protein is Large ribosomal subunit protein uL11.